Consider the following 261-residue polypeptide: Succinate dehydrogenase [ubiquinone] iron-sulfur subunit, mitochondrial (261 aa).

In terms of domain architecture, 2Fe-2S ferredoxin-type spans 31–122 (FKIYRWNPDT…DVKIYPLPHM (92 aa)). 4 residues coordinate [2Fe-2S] cluster: Cys-82, Cys-87, Cys-90, and Cys-102. The 4Fe-4S ferredoxin-type domain occupies 164–194 (DRKKLDGLYECILCACCSTACPSYWWNNEQY). Cys-174, Cys-177, and Cys-180 together coordinate [4Fe-4S] cluster. Position 184 (Cys-184) interacts with [3Fe-4S] cluster. Trp-189 lines the a ubiquinone pocket. 2 residues coordinate [3Fe-4S] cluster: Cys-231 and Cys-237. Position 241 (Cys-241) interacts with [4Fe-4S] cluster.

This sequence belongs to the succinate dehydrogenase/fumarate reductase iron-sulfur protein family. Component of complex II composed of four subunits: a flavoprotein (FP), an iron-sulfur protein (IP), and a cytochrome b composed of a large and a small subunit. Requires [2Fe-2S] cluster as cofactor. [3Fe-4S] cluster serves as cofactor. The cofactor is [4Fe-4S] cluster.

It is found in the mitochondrion inner membrane. It catalyses the reaction a quinone + succinate = fumarate + a quinol. It participates in carbohydrate metabolism; tricarboxylic acid cycle; fumarate from succinate (eukaryal route): step 1/1. Its function is as follows. Iron-sulfur protein (IP) subunit of succinate dehydrogenase (SDH) that is involved in complex II of the mitochondrial electron transport chain and is responsible for transferring electrons from succinate to ubiquinone (coenzyme Q). The chain is Succinate dehydrogenase [ubiquinone] iron-sulfur subunit, mitochondrial (SDH2) from Eremothecium gossypii (strain ATCC 10895 / CBS 109.51 / FGSC 9923 / NRRL Y-1056) (Yeast).